We begin with the raw amino-acid sequence, 328 residues long: 7,8-didemethyl-8-hydroxy-5-deazariboflavin synthase (328 aa).

The 242-residue stretch at 1–242 (MTYSRNIFIP…PDVSIQVPPN (242 aa)) folds into the Radical SAM core domain. [4Fe-4S] cluster is bound by residues C15, C19, and C22.

This sequence belongs to the radical SAM superfamily. CofG family. As to quaternary structure, consists of two subunits, CofG and CofH. It depends on [4Fe-4S] cluster as a cofactor.

It carries out the reaction 5-amino-5-(4-hydroxybenzyl)-6-(D-ribitylimino)-5,6-dihydrouracil + S-adenosyl-L-methionine = 7,8-didemethyl-8-hydroxy-5-deazariboflavin + 5'-deoxyadenosine + L-methionine + NH4(+) + H(+). It functions in the pathway cofactor biosynthesis; coenzyme F0 biosynthesis. In terms of biological role, catalyzes the radical-mediated synthesis of 7,8-didemethyl-8-hydroxy-5-deazariboflavin from 5-amino-5-(4-hydroxybenzyl)-6-(D-ribitylimino)-5,6-dihydrouracil. The chain is 7,8-didemethyl-8-hydroxy-5-deazariboflavin synthase from Methanothermobacter thermautotrophicus (strain ATCC 29096 / DSM 1053 / JCM 10044 / NBRC 100330 / Delta H) (Methanobacterium thermoautotrophicum).